The chain runs to 171 residues: Sec-independent protein translocase protein TatB (171 aa).

Residues 1 to 21 (MFDIGFSELLLVFIIGLVVLG) form a helical membrane-spanning segment. Residues 117–171 (KDNETAHEGVTPAAAQTQASSPEQKPETTPEPVVKPAADAEPKTAAPSPSSSDKP) form a disordered region. A compositionally biased stretch (polar residues) spans 130–139 (AAQTQASSPE).

Belongs to the TatB family. In terms of assembly, the Tat system comprises two distinct complexes: a TatABC complex, containing multiple copies of TatA, TatB and TatC subunits, and a separate TatA complex, containing only TatA subunits. Substrates initially bind to the TatABC complex, which probably triggers association of the separate TatA complex to form the active translocon.

It localises to the cell inner membrane. In terms of biological role, part of the twin-arginine translocation (Tat) system that transports large folded proteins containing a characteristic twin-arginine motif in their signal peptide across membranes. Together with TatC, TatB is part of a receptor directly interacting with Tat signal peptides. TatB may form an oligomeric binding site that transiently accommodates folded Tat precursor proteins before their translocation. The sequence is that of Sec-independent protein translocase protein TatB from Escherichia coli O6:K15:H31 (strain 536 / UPEC).